The chain runs to 132 residues: Small ribosomal subunit protein uS8 (132 aa).

The protein belongs to the universal ribosomal protein uS8 family. Part of the 30S ribosomal subunit. Contacts proteins S5 and S12.

One of the primary rRNA binding proteins, it binds directly to 16S rRNA central domain where it helps coordinate assembly of the platform of the 30S subunit. This Borrelia garinii subsp. bavariensis (strain ATCC BAA-2496 / DSM 23469 / PBi) (Borreliella bavariensis) protein is Small ribosomal subunit protein uS8.